Consider the following 638-residue polypeptide: RNA exonuclease 3 (638 aa).

The segment at 37–136 (AQDQVLEQKE…PPRRAPKEAL (100 aa)) is disordered. The segment covering 55 to 76 (LKLEPRPEAKETPKDDLRHVSD) has biased composition (basic and acidic residues). Residues 77–111 (SGRSTPVKKTTAPATNAENISPVSRQPNIPKNTAT) are compositionally biased toward polar residues. The region spanning 408–584 (ICFDCEMGYT…VEDALATGDL (177 aa)) is the Exonuclease domain. A compositionally biased stretch (polar residues) spans 612-622 (DSSSNTVSMQT). Positions 612-638 (DSSSNTVSMQTKLGEGAGAKRAREGTS) are disordered.

This sequence belongs to the REXO1/REXO3 family.

It localises to the cytoplasm. Its subcellular location is the nucleus. In terms of biological role, 3' to 5' exoribonuclease required for proper 3' end maturation of MRP RNA and of the U5L snRNA. The protein is RNA exonuclease 3 (rex3) of Emericella nidulans (strain FGSC A4 / ATCC 38163 / CBS 112.46 / NRRL 194 / M139) (Aspergillus nidulans).